The chain runs to 623 residues: Zinc finger protein 131 (623 aa).

The BTB domain maps to 34-98 (TDITLIVDGH…TYTAKLMIQG (65 aa)). The Nuclear localization signal 1 signature appears at 137–148 (TGKNEAKKRKIA). 3 consecutive C2H2-type zinc fingers follow at residues 261-283 (FHCEKCNRSFKLFYHFKEHMKSH), 288-311 (FKCEICNKRYLRESAWKQHLNCYH), and 328-350 (HVCQYCEKQFDHFGHFKEHLRKH). Residues K289 and K295 each participate in a glycyl lysine isopeptide (Lys-Gly) (interchain with G-Cter in SUMO2) cross-link. The short motif at 317-328 (VSKKQRTGKKIH) is the Nuclear localization signal 2 element. The C2H2-type 4; degenerate zinc finger occupies 356-381 (FECPNCHERFARNSTLKCHLTACQTG). 2 consecutive C2H2-type zinc fingers follow at residues 392–414 (YECQVCNSVFNSWDQFKDHLVIH) and 420–443 (NHCTLCDLWFMQGNELRRHLSDAH). The span at 573 to 617 (NQEERESSQADAAEAAREDHEDAEDLETKPTVDSEAEKAENEDRT) shows a compositional bias: basic and acidic residues. Residues 573 to 623 (NQEERESSQADAAEAAREDHEDAEDLETKPTVDSEAEKAENEDRTALPVLE) are disordered. K601 is covalently cross-linked (Glycyl lysine isopeptide (Lys-Gly) (interchain with G-Cter in SUMO)).

Belongs to the krueppel C2H2-type zinc-finger protein family. Post-translationally, monosumoylated at Lys-601 by CBX4 and UHRF2. Sumoylation may potentiate ZNF131 inhibition of estrogen signaling. Sumoylation does not interfere with ubiquitination. Ubiquitinated. In terms of tissue distribution, predominant expression is found in different brain areas such as the occipital and temporal lobe, the nucleus caudatus, hippocampus, and the cerebellum as well as in testis and thymus.

The protein resides in the nucleus. In terms of biological role, plays a role during development and organogenesis as well as in the function of the adult central nervous system. May be involved in transcriptional regulation as a repressor of ESR1/ER-alpha signaling. The sequence is that of Zinc finger protein 131 (ZNF131) from Homo sapiens (Human).